We begin with the raw amino-acid sequence, 341 residues long: MLHGHSPVSQALLGTFFTWGLTAAGAALVFVFSSGQRRILDGSLGFAAGVMLAASYWSLLAPAVEMAMSSGGFGSLAFLPVAIGFTLGAAFVYVADLLMPHWGAAEDPQTALALNLDPLLTKKSDAEGARMLFPESELSIRIGRAGLLSDKSENGEAYQRKRAVATDLAEGPAAPGPPRGSAAQPGGSSWRRIALLILAITIHNIPEGLAVGVGFGAVGKTASATFESARNLALGIGIQNFPEGLAVSLPLRGAGFSTWRAFWYGQLSGMVEPLAGVFGAFAVVLAEPILPYALAFAAGAMVYVIMDDIIPEAQISGNGKLASWASILGFVVMMSLDVGLG.

The next 7 membrane-spanning stretches (helical) occupy residues 12 to 32, 44 to 64, 72 to 92, 193 to 213, 262 to 284, 289 to 306, and 321 to 341; these read LLGT…VFVF, LGFA…APAV, GFGS…AAFV, IALL…AVGV, FWYG…FAVV, ILPY…YVIM, and LASW…VGLG.

Belongs to the ZIP transporter (TC 2.A.5) family.

It is found in the cell membrane. Its subcellular location is the nucleus. The protein localises to the cytoplasm. It localises to the golgi apparatus. It catalyses the reaction Zn(2+)(in) = Zn(2+)(out). The catalysed reaction is Cu(2+)(in) = Cu(2+)(out). Functionally, zinc importer that regulates cytosolic zinc concentrations either via zinc influx from the extracellular compartment or efflux from intracellular organelles such as Golgi apparatus. May transport copper ions as well. The transport mechanism remains to be elucidated. The sequence is that of Zinc transporter ZIP11 (SLC39A11) from Bos taurus (Bovine).